Reading from the N-terminus, the 121-residue chain is Putative SNURF-like protein (121 aa).

It belongs to the SNURF family.

The polypeptide is Putative SNURF-like protein (SNURFL) (Homo sapiens (Human)).